A 339-amino-acid chain; its full sequence is tRNA N6-adenosine threonylcarbamoyltransferase (339 aa).

Fe cation contacts are provided by His114 and His118. Substrate is bound by residues 137–141 (VVSGG), Asp170, Gly183, Asp187, and Asn277. Position 305 (Asp305) interacts with Fe cation.

The protein belongs to the KAE1 / TsaD family. It depends on Fe(2+) as a cofactor.

It localises to the cytoplasm. The enzyme catalyses L-threonylcarbamoyladenylate + adenosine(37) in tRNA = N(6)-L-threonylcarbamoyladenosine(37) in tRNA + AMP + H(+). In terms of biological role, required for the formation of a threonylcarbamoyl group on adenosine at position 37 (t(6)A37) in tRNAs that read codons beginning with adenine. Is involved in the transfer of the threonylcarbamoyl moiety of threonylcarbamoyl-AMP (TC-AMP) to the N6 group of A37, together with TsaE and TsaB. TsaD likely plays a direct catalytic role in this reaction. This is tRNA N6-adenosine threonylcarbamoyltransferase from Clostridium perfringens (strain SM101 / Type A).